Consider the following 484-residue polypeptide: Dynein regulatory complex subunit 2 (484 aa).

2 coiled-coil regions span residues 92–160 (VDCK…RKTI) and 374–403 (KEQE…GMEN).

It belongs to the DRC2 family. As to quaternary structure, component of the nexin-dynein regulatory complex (N-DRC). Interacts with DRC1.

The protein resides in the cytoplasm. It is found in the cytoskeleton. Its subcellular location is the flagellum basal body. The protein localises to the cell projection. It localises to the cilium. The protein resides in the flagellum. It is found in the flagellum axoneme. Component of the nexin-dynein regulatory complex (N-DRC), a key regulator of ciliary/flagellar motility which maintains the alignment and integrity of the distal axoneme and regulates microtubule sliding in motile axonemes. Plays a critical role in the assembly of N-DRC and also stabilizes the assembly of multiple inner dynein arms and radial spokes. Coassembles with DRC1 to form a central scaffold needed for assembly of the N-DRC and its attachment to the outer doublet microtubules. This chain is Dynein regulatory complex subunit 2 (CCDC65), found in Macaca fascicularis (Crab-eating macaque).